Here is a 244-residue protein sequence, read N- to C-terminus: Ribonuclease PH (244 aa).

Residues R90 and 128–130 each bind phosphate; that span reads GTR.

It belongs to the RNase PH family. Homohexameric ring arranged as a trimer of dimers.

It catalyses the reaction tRNA(n+1) + phosphate = tRNA(n) + a ribonucleoside 5'-diphosphate. Functionally, phosphorolytic 3'-5' exoribonuclease that plays an important role in tRNA 3'-end maturation. Removes nucleotide residues following the 3'-CCA terminus of tRNAs; can also add nucleotides to the ends of RNA molecules by using nucleoside diphosphates as substrates, but this may not be physiologically important. Probably plays a role in initiation of 16S rRNA degradation (leading to ribosome degradation) during starvation. The sequence is that of Ribonuclease PH from Prochlorococcus marinus (strain MIT 9313).